The following is a 161-amino-acid chain: MKAVSPVRPSGRKAPSGCGGGELALRCLAEHGHSLGGSAAAAAAAAAARCKAAEAAADEPALCLQCDMNDCYSRLRRLVPTIPPNKKVSKVEILQHVIDYILDLQLALETHPALLRQPPPPAPPHHPAGTCPAAPPRTPLTALNTDPAGAVNKQGDSILCR.

The region spanning 52 to 104 (AAEAAADEPALCLQCDMNDCYSRLRRLVPTIPPNKKVSKVEILQHVIDYILDL) is the bHLH domain. The span at 117-126 (QPPPPAPPHH) shows a compositional bias: pro residues. A disordered region spans residues 117 to 161 (QPPPPAPPHHPAGTCPAAPPRTPLTALNTDPAGAVNKQGDSILCR).

In terms of assembly, heterodimer with other HLH proteins.

The protein localises to the nucleus. Transcriptional regulator (lacking a basic DNA binding domain) which negatively regulates the basic helix-loop-helix (bHLH) transcription factors by forming heterodimers and inhibiting their DNA binding and transcriptional activity. Implicated in regulating a variety of cellular processes, including cellular growth, senescence, differentiation, apoptosis, angiogenesis, and neoplastic transformation. The protein is DNA-binding protein inhibitor ID-4 (ID4) of Homo sapiens (Human).